The sequence spans 232 residues: Adenosylcobinamide-GDP ribazoletransferase (232 aa).

Helical transmembrane passes span 31–51 (LPSFFPLVGYIVGSIYYLGAL), 59–79 (VFFLVLAFYFFDLFHFDGFLD), 102–122 (VGPFAVFFGTLFVVVFWNLYL), 126–146 (PFYFFISSTFGRYSMVLLMAF), 167–187 (LLISTIFTFFLIIFFKQYIIS), and 209–229 (VTGDVLGGTCLFVNGLILLIL).

This sequence belongs to the CobS family. The cofactor is Mg(2+).

It localises to the cell inner membrane. It carries out the reaction alpha-ribazole + adenosylcob(III)inamide-GDP = adenosylcob(III)alamin + GMP + H(+). The enzyme catalyses alpha-ribazole 5'-phosphate + adenosylcob(III)inamide-GDP = adenosylcob(III)alamin 5'-phosphate + GMP + H(+). The protein operates within cofactor biosynthesis; adenosylcobalamin biosynthesis; adenosylcobalamin from cob(II)yrinate a,c-diamide: step 7/7. Joins adenosylcobinamide-GDP and alpha-ribazole to generate adenosylcobalamin (Ado-cobalamin). Also synthesizes adenosylcobalamin 5'-phosphate from adenosylcobinamide-GDP and alpha-ribazole 5'-phosphate. This chain is Adenosylcobinamide-GDP ribazoletransferase, found in Thermosipho africanus (strain TCF52B).